Consider the following 273-residue polypeptide: MVIVRCKPTSPGRRHVVKVICPNLYKGRPIASLLQKKVKTGGRNNYGRITTRHIGGGHKKLYRCIDFKRRYDNVPAVVQRIEYDPNRSSNIILILYKNGKRSYILEPKGIKVGDIIESGNLVPIKLGNALPIKKIPIGTILHNIEIKSGKGGQIARSAGSYAQLISKENKYVVIRLRSGELRKIHIECRATIGEVGNSEHMLRILGKAGASRRYGIRPTVRGTAMNPVDHPHGGGEGRNFGKHPVSPWGLKTKGKKTRRNKRTERFIVRHRNK.

The interval Arg221 to Thr263 is disordered. A compositionally biased stretch (basic residues) spans Thr252 to Thr263.

The protein belongs to the universal ribosomal protein uL2 family. As to quaternary structure, part of the 50S ribosomal subunit. Forms a bridge to the 30S subunit in the 70S ribosome.

One of the primary rRNA binding proteins. Required for association of the 30S and 50S subunits to form the 70S ribosome, for tRNA binding and peptide bond formation. It has been suggested to have peptidyltransferase activity; this is somewhat controversial. Makes several contacts with the 16S rRNA in the 70S ribosome. This is Large ribosomal subunit protein uL2 from Buchnera aphidicola subsp. Cinara cedri (strain Cc).